The chain runs to 258 residues: Ribosomal RNA large subunit methyltransferase E (258 aa).

Gly58, Trp60, Asp78, Asp96, and Asp120 together coordinate S-adenosyl-L-methionine. Lys160 functions as the Proton acceptor in the catalytic mechanism.

It belongs to the class I-like SAM-binding methyltransferase superfamily. RNA methyltransferase RlmE family.

The protein localises to the cytoplasm. The catalysed reaction is uridine(2552) in 23S rRNA + S-adenosyl-L-methionine = 2'-O-methyluridine(2552) in 23S rRNA + S-adenosyl-L-homocysteine + H(+). Specifically methylates the uridine in position 2552 of 23S rRNA at the 2'-O position of the ribose in the fully assembled 50S ribosomal subunit. The protein is Ribosomal RNA large subunit methyltransferase E of Methanococcus maripaludis (strain C5 / ATCC BAA-1333).